Reading from the N-terminus, the 636-residue chain is Transcription termination factor FttA (636 aa).

Positions Glu-4–Arg-72 are KHa. The KHb stretch occupies residues Lys-73 to Pro-140. The segment at Asn-181 to Pro-383 is metallo-beta-lactamase N-terminus. Positions 242, 244, 246, 247, 329, and 352 each coordinate Zn(2+). The tract at residues Gln-384–Ser-577 is beta-Casp. Residues Gly-578–Lys-636 are metallo-beta-lactamase C-terminus. His-603 contributes to the Zn(2+) binding site.

The protein belongs to the metallo-beta-lactamase superfamily. RNA-metabolizing metallo-beta-lactamase-like family. FttA subfamily. As to quaternary structure, homodimer. Interacts with RNA polymerase (RNAP), interacts with the Spt4-Spt5 complex. The cofactor is Zn(2+).

Terminates transcription on the whole genome. Termination is linked to FttA-mediated RNA cleavage and does not require NTP hydrolysis. Cleaves endonucleolytically at the RNA exit channel of RNA polymerase (RNAP); the 5'-3' exonuclease activity of this protein degrades the nascent RNA released from RNAP. Its function is as follows. Terminates transcription genome-wide in M.maripaludis. Restores wild-type growth to a strain of Methanococcus maripaludis depleted for this gene at 22 degrees Celsius and prevents transcriptional read-through. Transcription termination is most effective in vivo on RNAs with more than one U4-tract in their 3'-ends. Has endonuclease activity after U-rich tracts in transcription termination sequences. The sequence is that of Transcription termination factor FttA from Lokiarchaeum sp. (strain GC14_75).